A 60-amino-acid chain; its full sequence is Large ribosomal subunit protein eL37 (60 aa).

Zn(2+) is bound by residues Cys19, Cys22, Cys34, and Cys37. A C4-type zinc finger spans residues 19–37 (CRRCGRISFHAQKKVCSSC).

This sequence belongs to the eukaryotic ribosomal protein eL37 family. Requires Zn(2+) as cofactor.

Binds to the 23S rRNA. In Methanoregula boonei (strain DSM 21154 / JCM 14090 / 6A8), this protein is Large ribosomal subunit protein eL37.